The following is a 105-amino-acid chain: uncharacterized protein (105 aa).

Residues 25-47 (AHSVTLLFGIFRSSPFLLLFLLI) traverse the membrane as a helical segment. The disordered stretch occupies residues 54–89 (GRGSQRMKKKRGRANPSENLRERADPTNGPAENGKK).

It is found in the membrane. This is an uncharacterized protein from Saccharomyces cerevisiae (strain ATCC 204508 / S288c) (Baker's yeast).